Reading from the N-terminus, the 310-residue chain is HTH-type transcriptional activator TtdR (310 aa).

Positions 6 to 63 (PLAKDLQVLVEIVHSGSFSAAAATLGQTPAFVTKRIQILENTLATTLLNRSARGVALT) constitute an HTH lysR-type domain. Positions 23–42 (FSAAAATLGQTPAFVTKRIQ) form a DNA-binding region, H-T-H motif.

The protein belongs to the LysR transcriptional regulatory family.

Positive regulator required for L-tartrate-dependent anaerobic growth on glycerol. Induces expression of the ttdA-ttdB-ygjE operon. The chain is HTH-type transcriptional activator TtdR (ttdR) from Escherichia coli O6:K15:H31 (strain 536 / UPEC).